The chain runs to 189 residues: Large ribosomal subunit protein bL17 (189 aa).

The protein belongs to the bacterial ribosomal protein bL17 family. Part of the 50S ribosomal subunit. Contacts protein L32.

This is Large ribosomal subunit protein bL17 from Rhodococcus jostii (strain RHA1).